A 196-amino-acid chain; its full sequence is uncharacterized protein (196 aa).

Residues 44-46 (TTA), Gly-80, Val-100, and 107-109 (PSL) each bind S-adenosyl-L-methionine.

Belongs to the class IV-like SAM-binding methyltransferase superfamily. RNA methyltransferase TrmH family.

This is an uncharacterized protein from Serratia marcescens.